A 59-amino-acid polypeptide reads, in one-letter code: Large ribosomal subunit protein uL30 (59 aa).

This sequence belongs to the universal ribosomal protein uL30 family. In terms of assembly, part of the 50S ribosomal subunit.

The chain is Large ribosomal subunit protein uL30 from Haemophilus ducreyi (strain 35000HP / ATCC 700724).